Reading from the N-terminus, the 106-residue chain is Toxin-like structure LSTX-D3 (106 aa).

The N-terminal stretch at Met-1 to Ser-20 is a signal peptide. The propeptide occupies Glu-21 to Arg-41. 4 cysteine pairs are disulfide-bonded: Cys-45–Cys-60, Cys-52–Cys-69, Cys-59–Cys-85, and Cys-71–Cys-83.

Belongs to the neurotoxin 19 (CSTX) family. 02 (D7) subfamily. In terms of tissue distribution, expressed by the venom gland.

It localises to the secreted. The protein is Toxin-like structure LSTX-D3 of Lycosa singoriensis (Wolf spider).